The sequence spans 66 residues: Phylloseptin-Az2 (66 aa).

Positions 1-22 (MAFLKKSLFLVLFLGLVSLSIC) are cleaved as a signal peptide. A propeptide spanning residues 23 to 44 (EEEKRETEEKENEQEDDDKSEE) is cleaved from the precursor. The segment at 24-45 (EEKRETEEKENEQEDDDKSEEK) is disordered. The segment covering 31-41 (EKENEQEDDDK) has biased composition (acidic residues). At Phe-65 the chain carries Phenylalanine amide.

Expressed by the skin glands.

The protein resides in the secreted. In terms of biological role, has antibacterial activity against the Gram-negative bacteria E.coli ATCC 11775 (MIC=7.2 uM), and the Gram-positive bacteria S.aureus ATCC 12600 (MIC=3.6 uM) and M.luteus ATCC 49732 (MIC=1.8 uM). Does not inhibit the growth of the fungus C.albicans. This Pithecopus azureus (Orange-legged monkey tree frog) protein is Phylloseptin-Az2.